A 118-amino-acid polypeptide reads, in one-letter code: Ribosome-binding factor A (118 aa).

This sequence belongs to the RbfA family. As to quaternary structure, monomer. Binds 30S ribosomal subunits, but not 50S ribosomal subunits or 70S ribosomes.

The protein localises to the cytoplasm. Its function is as follows. One of several proteins that assist in the late maturation steps of the functional core of the 30S ribosomal subunit. Associates with free 30S ribosomal subunits (but not with 30S subunits that are part of 70S ribosomes or polysomes). Required for efficient processing of 16S rRNA. May interact with the 5'-terminal helix region of 16S rRNA. This is Ribosome-binding factor A from Thermodesulfovibrio yellowstonii (strain ATCC 51303 / DSM 11347 / YP87).